Consider the following 247-residue polypeptide: Acidic leucine-rich nuclear phosphoprotein 32 family member A (247 aa).

Thr15 bears the Phosphothreonine mark. Position 17 is a phosphoserine (Ser17). LRR repeat units lie at residues 18-41, 43-64, 65-87, and 89-110; these read DVKE…TDEF, ELEF…PKLN, KLKK…AEKC, and NLKH…EPLK. Positions 123–161 constitute an LRRCT domain; the sequence is CEVTNLNAYRENVFKLLPQVMYLDGYDRDNKEAPDSDVE. The interval 150–172 is necessary for tumor-suppressive function; sequence RDNKEAPDSDVEGYVEDDDEEDE. The segment at 150–247 is disordered; the sequence is RDNKEAPDSD…EPDDEGQEDD (98 aa). Acidic residues predominate over residues 157 to 230; the sequence is DSDVEGYVED…EDEEDAAEEE (74 aa). Ser158 and Ser202 each carry phosphoserine. An interaction with E4F1 region spans residues 165-247; that stretch reads EDDDEEDEDE…EPDDEGQEDD (83 aa).

Belongs to the ANP32 family. As to quaternary structure, component of the SET complex, composed of at least ANP32A, APEX1, HMGB2, NME1, SET and TREX1. Directly interacts with SET. Interacts with ATXN1/SCA1. Interacts with MAP1B. Interacts with ELAVL1. Part of the INHAT (inhibitor of histone acetyltransferases) complex. Interacts with E4F1. Post-translationally, phosphorylated on serine residues, at least in part by casein kinase 2/CK2. In terms of processing, some glutamate residues are glycylated by TTLL8. This modification occurs exclusively on glutamate residues and results in a glycine chain on the gamma-carboxyl group. As to expression, widely distributed in the central nervous system, with an abundant expression in the cerebellum.

Its subcellular location is the nucleus. The protein localises to the cytoplasm. The protein resides in the endoplasmic reticulum. Multifunctional protein that is involved in the regulation of many processes including tumor suppression, apoptosis, cell cycle progression or transcription. Promotes apoptosis by favouring the activation of caspase-9/CASP9 and allowing apoptosome formation. In addition, plays a role in the modulation of histone acetylation and transcription as part of the INHAT (inhibitor of histone acetyltransferases) complex. Inhibits the histone-acetyltranferase activity of EP300/CREBBP (CREB-binding protein) and EP300/CREBBP-associated factor by histone masking. Preferentially binds to unmodified histone H3 and sterically inhibiting its acetylation and phosphorylation leading to cell growth inhibition. Participates in other biochemical processes such as regulation of mRNA nuclear-to-cytoplasmic translocation and stability by its association with ELAVL1 (Hu-antigen R). Plays a role in E4F1-mediated transcriptional repression as well as inhibition of protein phosphatase 2A. In Rattus norvegicus (Rat), this protein is Acidic leucine-rich nuclear phosphoprotein 32 family member A (Anp32a).